A 637-amino-acid polypeptide reads, in one-letter code: Glutamate--cysteine ligase catalytic subunit (637 aa).

An N-acetylmethionine modification is found at M1. Phosphoserine occurs at positions 5 and 8.

It belongs to the glutamate--cysteine ligase type 3 family. As to quaternary structure, heterodimer of a catalytic heavy chain and a regulatory light chain.

The enzyme catalyses L-cysteine + L-glutamate + ATP = gamma-L-glutamyl-L-cysteine + ADP + phosphate + H(+). The catalysed reaction is (2S)-2-aminobutanoate + L-glutamate + ATP = gamma-L-glutamyl-(2S)-2-aminobutanoate + ADP + phosphate + H(+). Its pathway is sulfur metabolism; glutathione biosynthesis; glutathione from L-cysteine and L-glutamate: step 1/2. With respect to regulation, feedback inhibition by glutathione. In terms of biological role, catalyzes the ATP-dependent ligation of L-glutamate and L-cysteine and participates in the first and rate-limiting step in glutathione biosynthesis. This is Glutamate--cysteine ligase catalytic subunit from Homo sapiens (Human).